Here is a 215-residue protein sequence, read N- to C-terminus: Probable phosphoglycerate mutase GpmB (215 aa).

Residues 8–15 (RHGETQWN), 21–22 (QG), Arg58, Arg60, 82–85 (ELNM), 104–105 (RR), and 151–152 (GI) each bind substrate. The active-site Tele-phosphohistidine intermediate is the His9. Glu82 (proton donor/acceptor) is an active-site residue.

It belongs to the phosphoglycerate mutase family. GpmB subfamily.

The catalysed reaction is (2R)-2-phosphoglycerate = (2R)-3-phosphoglycerate. It participates in carbohydrate degradation; glycolysis; pyruvate from D-glyceraldehyde 3-phosphate: step 3/5. This chain is Probable phosphoglycerate mutase GpmB, found in Escherichia coli O9:H4 (strain HS).